Here is a 197-residue protein sequence, read N- to C-terminus: MLTAKFDQLVKQLRILPGVGQKSAQRMALHLLTKKRPQGMALAQALDEAMRDIVECQRCHSFSDEAVCPLCQDPRRDDTLLCVVETAADVMAIEQTAGYRGRYFVLGGHLSPIDGISADDLNIEQLVWRVKQEPVEELILATGTTVEGQTTAHFISEAVSRHVNKVTRLAQGVPMGGELEYLDSMTLGQAMQNRSFL.

A C4-type zinc finger spans residues 56–71 (CQRCHSFSDEAVCPLC). The region spanning 79 to 174 (TLLCVVETAA…KVTRLAQGVP (96 aa)) is the Toprim domain.

Belongs to the RecR family.

May play a role in DNA repair. It seems to be involved in an RecBC-independent recombinational process of DNA repair. It may act with RecF and RecO. The protein is Recombination protein RecR of Psychrobacter cryohalolentis (strain ATCC BAA-1226 / DSM 17306 / VKM B-2378 / K5).